Reading from the N-terminus, the 315-residue chain is Glycine--tRNA ligase alpha subunit (315 aa).

The protein belongs to the class-II aminoacyl-tRNA synthetase family. In terms of assembly, tetramer of two alpha and two beta subunits.

It is found in the cytoplasm. The enzyme catalyses tRNA(Gly) + glycine + ATP = glycyl-tRNA(Gly) + AMP + diphosphate. This Pseudomonas putida (strain GB-1) protein is Glycine--tRNA ligase alpha subunit.